A 99-amino-acid chain; its full sequence is Goannatyrotoxin-Vere1 (99 aa).

The signal sequence occupies residues Met1 to Ala28. The residue at position 64 (Tyr64) is a Tyrosine amide. A propeptide spans Ser68–Trp99 (C-terminal extension).

The protein belongs to the NPY family. As to expression, expressed by the mandibular venom gland.

It localises to the secreted. Functionally, shows a potent unique triphasic action, rapid biphasic hypertension followed by prolonged hypotension. This is Goannatyrotoxin-Vere1 from Varanus eremius (Rusty desert monitor).